Consider the following 207-residue polypeptide: Pyridoxal 5'-phosphate synthase subunit PdxT (207 aa).

51–53 (GES) serves as a coordination point for L-glutamine. Catalysis depends on Cys-83, which acts as the Nucleophile. L-glutamine contacts are provided by residues Arg-112 and 143-144 (IR). Catalysis depends on charge relay system residues His-184 and Glu-186.

This sequence belongs to the glutaminase PdxT/SNO family. As to quaternary structure, in the presence of PdxS, forms a dodecamer of heterodimers. Only shows activity in the heterodimer.

It catalyses the reaction aldehydo-D-ribose 5-phosphate + D-glyceraldehyde 3-phosphate + L-glutamine = pyridoxal 5'-phosphate + L-glutamate + phosphate + 3 H2O + H(+). It carries out the reaction L-glutamine + H2O = L-glutamate + NH4(+). Its pathway is cofactor biosynthesis; pyridoxal 5'-phosphate biosynthesis. Catalyzes the hydrolysis of glutamine to glutamate and ammonia as part of the biosynthesis of pyridoxal 5'-phosphate. The resulting ammonia molecule is channeled to the active site of PdxS. The sequence is that of Pyridoxal 5'-phosphate synthase subunit PdxT from Kineococcus radiotolerans (strain ATCC BAA-149 / DSM 14245 / SRS30216).